Reading from the N-terminus, the 446-residue chain is Histidine--tRNA ligase (446 aa).

The segment at 403 to 422 is disordered; sequence TASVKPLRGTGDDGEKSVQQ.

Belongs to the class-II aminoacyl-tRNA synthetase family. In terms of assembly, homodimer.

It localises to the cytoplasm. It catalyses the reaction tRNA(His) + L-histidine + ATP = L-histidyl-tRNA(His) + AMP + diphosphate + H(+). This is Histidine--tRNA ligase from Burkholderia thailandensis (strain ATCC 700388 / DSM 13276 / CCUG 48851 / CIP 106301 / E264).